The primary structure comprises 469 residues: ATP synthase subunit beta (469 aa).

155–162 (GGAGCGKT) contributes to the ATP binding site.

This sequence belongs to the ATPase alpha/beta chains family. F-type ATPases have 2 components, CF(1) - the catalytic core - and CF(0) - the membrane proton channel. CF(1) has five subunits: alpha(3), beta(3), gamma(1), delta(1), epsilon(1). CF(0) has three main subunits: a(1), b(2) and c(9-12). The alpha and beta chains form an alternating ring which encloses part of the gamma chain. CF(1) is attached to CF(0) by a central stalk formed by the gamma and epsilon chains, while a peripheral stalk is formed by the delta and b chains.

It localises to the cell inner membrane. The catalysed reaction is ATP + H2O + 4 H(+)(in) = ADP + phosphate + 5 H(+)(out). Produces ATP from ADP in the presence of a proton gradient across the membrane. The catalytic sites are hosted primarily by the beta subunits. The polypeptide is ATP synthase subunit beta (Syntrophus aciditrophicus (strain SB)).